A 430-amino-acid polypeptide reads, in one-letter code: Enolase (430 aa).

Residue glutamine 163 participates in (2R)-2-phosphoglycerate binding. Glutamate 205 serves as the catalytic Proton donor. 3 residues coordinate Mg(2+): aspartate 242, glutamate 288, and aspartate 315. Positions 340, 369, 370, and 391 each coordinate (2R)-2-phosphoglycerate. Lysine 340 acts as the Proton acceptor in catalysis.

This sequence belongs to the enolase family. Mg(2+) is required as a cofactor.

The protein localises to the cytoplasm. It localises to the secreted. It is found in the cell surface. The enzyme catalyses (2R)-2-phosphoglycerate = phosphoenolpyruvate + H2O. It participates in carbohydrate degradation; glycolysis; pyruvate from D-glyceraldehyde 3-phosphate: step 4/5. In terms of biological role, catalyzes the reversible conversion of 2-phosphoglycerate (2-PG) into phosphoenolpyruvate (PEP). It is essential for the degradation of carbohydrates via glycolysis. In Onion yellows phytoplasma (strain OY-M), this protein is Enolase.